Here is a 710-residue protein sequence, read N- to C-terminus: Subtilisin-like protease SBT4.8 (710 aa).

A signal peptide spans 1–23; the sequence is MVKRASFCLLSCLIILFLSSVSA. Residues 24-111 constitute a propeptide, activation peptide; it reads IIYDPQDKQV…VFRSKNYKLQ (88 aa). In terms of domain architecture, Inhibitor I9 spans 33–110; sequence VYVVYMGSLP…SVFRSKNYKL (78 aa). The 445-residue stretch at 115 to 559 folds into the Peptidase S8 domain; sequence SWDFMGMKEG…AGHVDPIAAI (445 aa). The Charge relay system role is filled by Asp143. N-linked (GlcNAc...) asparagine glycosylation is present at Asn174. His198 (charge relay system) is an active-site residue. N-linked (GlcNAc...) asparagine glycosylation is found at Asn221, Asn364, and Asn419. The 61-residue stretch at 354–414 folds into the PA domain; sequence KYPLEYGDYL…VLSQDDFDSL (61 aa). The Charge relay system role is filled by Ser498. N-linked (GlcNAc...) asparagine glycosylation is found at Asn535, Asn568, Asn580, Asn618, and Asn636.

The protein belongs to the peptidase S8 family. Post-translationally, the C-terminal propeptide is autocleaved.

Its subcellular location is the secreted. The polypeptide is Subtilisin-like protease SBT4.8 (Arabidopsis thaliana (Mouse-ear cress)).